A 55-amino-acid chain; its full sequence is Large ribosomal subunit protein bL33 (55 aa).

This sequence belongs to the bacterial ribosomal protein bL33 family.

The chain is Large ribosomal subunit protein bL33 from Aeromonas hydrophila subsp. hydrophila (strain ATCC 7966 / DSM 30187 / BCRC 13018 / CCUG 14551 / JCM 1027 / KCTC 2358 / NCIMB 9240 / NCTC 8049).